The chain runs to 432 residues: MESAAGEEGKAAPSLPLATLIGRELRGGGSERPLVRYGHFGFAKRGEDYFLVKPDCLRVPGDPSSAFSVFAVFDGHNGVSAAVFSKEHLLEHVMSAVPQGIGRDDWLQALPRALVAGFVKTDIDFQRKGEASGTTATLVVVDGFTVTVASVGDSRCILDTQGGVISLLTVDHRLEENVEERERVTASGGEVSRLNLCGGQEVGPLRCWPGGLCLSRSIGDTDVGEFIVPIPHVKQVKLSNAGGRLIIASDGIWDALSSEAAAQACRGLPAELAAKLVVKQALKTSGLKDDTTCVVVDIIPSDHSSTPPSLSPKKNQNKLRSLLFGRRSHSSVGKLGNKSASFDSVEELFEEGSAMLDERLGRNFPSKANSSPSRCAICQVDQAPFEDLVTDNGGGCCSAPSTPWVGPYLCSDCRKKKDAMEGKRSSRSTACR.

Residues 27–298 (GGGSERPLVR…DDTTCVVVDI (272 aa)) form the PPM-type phosphatase domain. Mn(2+) contacts are provided by Asp-74, Gly-75, Asp-250, and Asp-289.

The protein belongs to the PP2C family. Mg(2+) serves as cofactor. The cofactor is Mn(2+).

It catalyses the reaction O-phospho-L-seryl-[protein] + H2O = L-seryl-[protein] + phosphate. The catalysed reaction is O-phospho-L-threonyl-[protein] + H2O = L-threonyl-[protein] + phosphate. This Oryza sativa subsp. japonica (Rice) protein is Probable protein phosphatase 2C 33.